Reading from the N-terminus, the 357-residue chain is Dual-specificity RNA methyltransferase RlmN (357 aa).

E89 (proton acceptor) is an active-site residue. Residues 109-340 (EGEKYTVCVS…CTIRESKALD (232 aa)) form the Radical SAM core domain. An intrachain disulfide couples C116 to C345. Positions 123, 127, and 130 each coordinate [4Fe-4S] cluster. Residues 173 to 174 (GE), S203, 226 to 228 (SLH), and N302 each bind S-adenosyl-L-methionine. The active-site S-methylcysteine intermediate is the C345.

This sequence belongs to the radical SAM superfamily. RlmN family. The cofactor is [4Fe-4S] cluster.

The protein localises to the cytoplasm. The enzyme catalyses adenosine(2503) in 23S rRNA + 2 reduced [2Fe-2S]-[ferredoxin] + 2 S-adenosyl-L-methionine = 2-methyladenosine(2503) in 23S rRNA + 5'-deoxyadenosine + L-methionine + 2 oxidized [2Fe-2S]-[ferredoxin] + S-adenosyl-L-homocysteine. It carries out the reaction adenosine(37) in tRNA + 2 reduced [2Fe-2S]-[ferredoxin] + 2 S-adenosyl-L-methionine = 2-methyladenosine(37) in tRNA + 5'-deoxyadenosine + L-methionine + 2 oxidized [2Fe-2S]-[ferredoxin] + S-adenosyl-L-homocysteine. In terms of biological role, specifically methylates position 2 of adenine 2503 in 23S rRNA and position 2 of adenine 37 in tRNAs. m2A2503 modification seems to play a crucial role in the proofreading step occurring at the peptidyl transferase center and thus would serve to optimize ribosomal fidelity. This is Dual-specificity RNA methyltransferase RlmN from Helicobacter pylori (strain P12).